The sequence spans 89 residues: Dynein light chain 1, cytoplasmic (89 aa).

Lys36 is subject to N6-acetyllysine. Residue Lys43 forms a Glycyl lysine isopeptide (Lys-Gly) (interchain with G-Cter in SUMO2) linkage. The tract at residues 67-89 (THETKHFIYFYLGQVAILLFKSG) is interaction with ESR1. Ser88 carries the phosphoserine modification.

The protein belongs to the dynein light chain family. Homodimer. Monomer; the monomeric form is incapable of binding to target proteins. The cytoplasmic dynein 1 complex consists of two catalytic heavy chains (HCs) and a number of non-catalytic subunits presented by intermediate chains (ICs), light intermediate chains (LICs) and light chains (LCs); the composition seems to vary in respect to the IC, LIC and LC composition. The heavy chain homodimer serves as a scaffold for the probable homodimeric assembly of the respective non-catalytic subunits. The ICs and LICs bind directly to the HC dimer and the LCs assemble on the IC dimer. Interacts with TXNDC17. Interacts with WWC1 and ESR1. The WWC1-DYNLL1 interaction is mandatory for the recruitment and transactivation functions of ESR1 or DYNLL1 to the target chromatin. Interacts with BCL2L11. Interacts with BCL2; the interaction is greatly enhanced in the nucleus and in mitochondria upon induction of apoptosis. Interacts with PAK1; the interaction requires dimeric DYNLL1. Interacts with MYZAP. Part of an astrin (SPAG5)-kinastrin (SKAP) complex containing KNSTRN, SPAG5, PLK1, DYNLL1 and SGO2. Interacts with ATMIN; this interaction inhibits ATMIN transcriptional activity and hence may play a role in a feedback loop whereby DYNLL1 inhibits transactivation of its own promoter by ATMIN. Interacts with NEK9 (not phosphorylated at 'Ser-944'). Interacts with BICD2. Interacts with BCAS1. Interacts with Basson/BSN. Interacts with HDAC6. Interacts with TPPP. Interacts with AMBRA1 (via TQT motifs); tethering AMBRA1 to the cytoskeleton. Interacts with FAM83D/CHICA (via C-terminus). Interacts with HMMR, SPAG5/Astrin and KNSTRN/Kinastrin. Interacts with TLK2. Interacts with NOS1. Interacts with WWC1, WWC2 and WWC3. Interacts with MRE11; inhibiting MRE11 homodimerization and activity. In terms of assembly, (Microbial infection) Interacts with bovine immunodeficiency virus Gag protein; this interaction is critical for intracellular microtubule-dependent viral genome transport. Post-translationally, phosphorylation at Ser-88 promotes recruitment to DNA double-strand breaks (DSBs) by TP53BP1 and ability to inhibit MRE11.

It localises to the cytoplasm. The protein localises to the cytoskeleton. The protein resides in the microtubule organizing center. It is found in the centrosome. Its subcellular location is the chromosome. It localises to the nucleus. The protein localises to the mitochondrion. Its function is as follows. Acts as one of several non-catalytic accessory components of the cytoplasmic dynein 1 complex that are thought to be involved in linking dynein to cargos and to adapter proteins that regulate dynein function. Cytoplasmic dynein 1 acts as a motor for the intracellular retrograde motility of vesicles and organelles along microtubules. May play a role in changing or maintaining the spatial distribution of cytoskeletal structures. In addition to its role in cytoskeleton and transport, acts as a protein-protein adapter, which inhibits and/or sequesters target proteins. Involved in the response to DNA damage by acting as a key regulator of DNA end resection: when phosphorylated at Ser-88, recruited to DNA double-strand breaks (DSBs) by TP53BP1 and acts by disrupting MRE11 dimerization, thereby inhibiting DNA end resection. In a subset of DSBs, DYNLL1 remains unphosphorylated and promotes the recruitment of the Shieldin complex. Binds and inhibits the catalytic activity of neuronal nitric oxide synthase/NOS1. Promotes transactivation functions of ESR1 and plays a role in the nuclear localization of ESR1. Regulates apoptotic activities of BCL2L11 by sequestering it to microtubules. Upon apoptotic stimuli the BCL2L11-DYNLL1 complex dissociates from cytoplasmic dynein and translocates to mitochondria and sequesters BCL2 thus neutralizing its antiapoptotic activity. The chain is Dynein light chain 1, cytoplasmic (DYNLL1) from Bos taurus (Bovine).